The chain runs to 425 residues: MVSLSVLLRGGLVLYGRDYKLTRADVLIEGDKIVEVKRNINKPADEVLDVSKSLVIPSFINAHTHSPMVILRGLAEDVPLMEWLQEYIWPVERKLRRKDVYWGSKLALIEMAHSGTSTFVDMYFHMEEIAKATEEVGLRAYLGYGMVDLDDEEKRKIEMRETEKLYEFIKKLDSSKVNFILAPHAPYTCSFDCLRWVSEKSREWNSLVTIHLAETQDEIKIIREKYGKSPVDVLEDVGLLNEKLIAAHGIWLSDEDIRKISSAGATIAHCPASNMKLGSGVFPMKKALENNVNVALGTDGAASNNTLDILREMRLASLLQKVIHRDPSIVKSEDIFRMATLNGAKALGLKAGVIAEGYLADIAVIDLRKAHLLPVNSPLASIIFSARGGDVDTLIVGGEIVMLDSELLTVDEEKVIDKFLEVSVA.

Zn(2+)-binding residues include histidine 63 and histidine 65. 2 residues coordinate substrate: glutamate 92 and histidine 184. Zn(2+) is bound at residue histidine 211. The substrate site is built by glutamate 214 and aspartate 299. Zn(2+) is bound at residue aspartate 299.

Belongs to the metallo-dependent hydrolases superfamily. MTA/SAH deaminase family. The cofactor is Zn(2+).

The catalysed reaction is S-adenosyl-L-homocysteine + H2O + H(+) = S-inosyl-L-homocysteine + NH4(+). The enzyme catalyses S-methyl-5'-thioadenosine + H2O + H(+) = S-methyl-5'-thioinosine + NH4(+). Its function is as follows. Catalyzes the deamination of 5-methylthioadenosine and S-adenosyl-L-homocysteine into 5-methylthioinosine and S-inosyl-L-homocysteine, respectively. Is also able to deaminate adenosine. The protein is 5-methylthioadenosine/S-adenosylhomocysteine deaminase of Pyrococcus abyssi (strain GE5 / Orsay).